The primary structure comprises 132 residues: Small ribosomal subunit protein uS8 (132 aa).

The protein belongs to the universal ribosomal protein uS8 family. As to quaternary structure, part of the 30S ribosomal subunit. Contacts proteins S5 and S12.

One of the primary rRNA binding proteins, it binds directly to 16S rRNA central domain where it helps coordinate assembly of the platform of the 30S subunit. This chain is Small ribosomal subunit protein uS8, found in Streptococcus agalactiae serotype V (strain ATCC BAA-611 / 2603 V/R).